The sequence spans 518 residues: MTAYKPYRHQLRRSLFASTIFPVFLVIIIGLVSFYAIYIWIEHRTIHQHVNESQSSLHHIEKQIQTFITQHNNSFQELDLTNHHDVTATKRELLKLIHQQPATLYYELSGPNQFITNNYEHLNTKNMYLFSTHQLKFKNSTYMLKIYMANTPRLSEIKKDSRQFALIVDRYDNILYANDDRFTIGEKYRPQQFGFMNESVKLNHANHRLIIYKDIHENIEDGITLLIVMAVVLVLLVIFGFISADNMAKRQTKDIETIIQKIYYAKNRHLGTYTPLKNNSELEEINNYIYDLFESNEQLIHSIEHTERRLRDIQLKEIERQFQPHFLFNTMQTIQYLITLSPKLAQTVVQQLSQMLRYSLRTNSHTVELNEELNYIEQYVAIQNIRFDDMIKLHIESSEEARHQTIGKMMLQPLIENAIKHGRDTESLDITIRLTLARQNLHVLVCDNGIGMSSSRLQYVRQSLNNDVFDTKHLGLNHLHNKAMIQYGSHARLHIFSKRNLGTLICYKIPLSRGNVDV.

2 consecutive transmembrane segments (helical) span residues 20–40 and 222–242; these read IFPVFLVIIIGLVSFYAIYIW and GITLLIVMAVVLVLLVIFGFI. One can recognise a Histidine kinase domain in the interval 297 to 513; it reads EQLIHSIEHT…LICYKIPLSR (217 aa). A Phosphohistidine; by autocatalysis modification is found at histidine 325.

Autophosphorylated.

The protein localises to the cell membrane. The catalysed reaction is ATP + protein L-histidine = ADP + protein N-phospho-L-histidine.. Its function is as follows. Member of the two-component regulatory system HptS/HptR that regulates genes involved in hexose phosphate transport system in response to changes in extracellular phosphate sources. May act as a sensor protein kinase which is autophosphorylated at a histidine residue and transfers its phosphate group to the conserved aspartic acid residue in the regulatory domain of HptS. In turn, HptS antagonizes CcpA-dependent transcription of a subset of CcpA-regulated genes involved in antibiotic susceptibility. The protein is Sensor protein kinase HptS (hptS) of Staphylococcus aureus (strain bovine RF122 / ET3-1).